The following is a 597-amino-acid chain: Elongation factor 4 (597 aa).

Positions 2–184 (DHIRNFSIIA…SLIAKVPPPK (183 aa)) constitute a tr-type G domain. Residues 14 to 19 (DHGKST) and 131 to 134 (NKID) each bind GTP.

This sequence belongs to the TRAFAC class translation factor GTPase superfamily. Classic translation factor GTPase family. LepA subfamily.

The protein localises to the cell inner membrane. It carries out the reaction GTP + H2O = GDP + phosphate + H(+). Its function is as follows. Required for accurate and efficient protein synthesis under certain stress conditions. May act as a fidelity factor of the translation reaction, by catalyzing a one-codon backward translocation of tRNAs on improperly translocated ribosomes. Back-translocation proceeds from a post-translocation (POST) complex to a pre-translocation (PRE) complex, thus giving elongation factor G a second chance to translocate the tRNAs correctly. Binds to ribosomes in a GTP-dependent manner. In Burkholderia lata (strain ATCC 17760 / DSM 23089 / LMG 22485 / NCIMB 9086 / R18194 / 383), this protein is Elongation factor 4.